We begin with the raw amino-acid sequence, 737 residues long: tRNA (guanine(27)-N(2))-dimethyltransferase (737 aa).

Positions 1–10 (MENMAEEELL) are enriched in acidic residues. A disordered region spans residues 1 to 65 (MENMAEEELL…ASAPVPAPAL (65 aa)). A compositionally biased stretch (low complexity) spans 17-49 (VVQVPVPTPTPDSARVPAPAPDSAPVSASTPAP). Phosphothreonine is present on Thr24. Pro residues predominate over residues 50–62 (ASAPTPASAPVPA). Ser72 carries the phosphoserine modification. Positions 141–145 (HKLHR) match the Nucleolar localization signal motif. The C2H2-type zinc-finger motif lies at 190–212 (YHCIICSATITRRTDMLGHVRRH). Residues 233 to 692 (EILKEADTDV…APLMQFKSIL (460 aa)) enclose the Trm1 methyltransferase domain. S-adenosyl-L-methionine contacts are provided by Arg266, Asp313, Asp363, and Ala364. 4 residues coordinate Zn(2+): Cys494, Cys497, Cys519, and Cys521. Residue Lys589 forms a Glycyl lysine isopeptide (Lys-Gly) (interchain with G-Cter in SUMO2) linkage. Position 616 is a phosphoserine (Ser616).

It belongs to the class I-like SAM-binding methyltransferase superfamily. Trm1 family.

The protein resides in the nucleus. It localises to the nucleolus. It carries out the reaction guanosine(27) in tRNA(Tyr) + 2 S-adenosyl-L-methionine = N(2)-dimethylguanosine(27) in tRNA(Tyr) + 2 S-adenosyl-L-homocysteine + 2 H(+). Specifically dimethylates a single guanine residue at position 27 of tRNA(Tyr) using S-adenosyl-L-methionine as donor of the methyl groups. Dimethylation at position 27 of tRNA(Tyr) is required for efficient translation of tyrosine codons. Also required to maintain 3-(3-amino-3-carboxypropyl)uridine (acp3U) in the D-loop of several cytoplasmic tRNAs. This Bos taurus (Bovine) protein is tRNA (guanine(27)-N(2))-dimethyltransferase (TRMT1L).